The chain runs to 107 residues: uncharacterized protein (107 aa).

Residues 34 to 107 (FASKDKKDEK…SDNQKKDMSY (74 aa)) are a coiled coil.

This is an uncharacterized protein from Dictyostelium discoideum (Social amoeba).